We begin with the raw amino-acid sequence, 114 residues long: UPF0757 protein YmgG (114 aa).

The protein belongs to the UPF0757 family.

This Edwardsiella ictaluri (strain 93-146) protein is UPF0757 protein YmgG.